Consider the following 253-residue polypeptide: MIENSSWSMTFEERENRRLQEASMRLEQENDDLAHELVTSKIALRNDLDQAEDKADVLNKELLLTKQRLVETEEEKRKQEEETAQLKEVFRKQLEKAEYEIKKTTAIIAEYKQICSQLSTRLEKQQAASKEELEVVKGKMMACKHCSDIFSKEGALKLAATGREDQGIETDDEKDSLKKQLREMELELAQTKLQLVEAKCKIQELEHQRGALMNEIQAAKNSWFSKTLNSIKTATGTQPLQPAPVTQPPKEST.

Residues 8-222 adopt a coiled-coil conformation; that stretch reads SMTFEERENR…MNEIQAAKNS (215 aa). Positions 233 to 253 are disordered; that stretch reads TATGTQPLQPAPVTQPPKEST.

The sequence is that of Rab GTPase-activating protein 1-like, isoform 10 (RABGAP1L) from Homo sapiens (Human).